The chain runs to 414 residues: Dihydroorotase (414 aa).

Zn(2+)-binding residues include histidine 56 and histidine 58. Substrate contacts are provided by residues 58-60 (HFR) and asparagine 90. The Zn(2+) site is built by lysine 138, histidine 171, histidine 219, and aspartate 280. Lysine 138 bears the N6-carboxylysine mark. Aspartate 280 is a catalytic residue. Histidine 284 is a substrate binding site.

This sequence belongs to the metallo-dependent hydrolases superfamily. DHOase family. Class I DHOase subfamily. Requires Zn(2+) as cofactor.

The catalysed reaction is (S)-dihydroorotate + H2O = N-carbamoyl-L-aspartate + H(+). The protein operates within pyrimidine metabolism; UMP biosynthesis via de novo pathway; (S)-dihydroorotate from bicarbonate: step 3/3. Functionally, catalyzes the reversible cyclization of carbamoyl aspartate to dihydroorotate. This Thermoplasma acidophilum (strain ATCC 25905 / DSM 1728 / JCM 9062 / NBRC 15155 / AMRC-C165) protein is Dihydroorotase.